Here is a 312-residue protein sequence, read N- to C-terminus: tRNA uridine(34) hydroxylase (312 aa).

The Rhodanese domain occupies 130 to 225; it reads RGDDVVFFDG…YGEKYGNDGL (96 aa). C185 acts as the Cysteine persulfide intermediate in catalysis.

It belongs to the TrhO family.

The enzyme catalyses uridine(34) in tRNA + AH2 + O2 = 5-hydroxyuridine(34) in tRNA + A + H2O. Catalyzes oxygen-dependent 5-hydroxyuridine (ho5U) modification at position 34 in tRNAs. The sequence is that of tRNA uridine(34) hydroxylase from Corynebacterium diphtheriae (strain ATCC 700971 / NCTC 13129 / Biotype gravis).